The following is a 320-amino-acid chain: MSGGSSGTQQREREILLVAHPGRAEITETARRVGKIFERAGIGLRVLVDEVDSTRIEPMDGMAADEFLVPGLEVTIVQAGPDAALGCEMVLVLGGDGTFLRAAELAQAASIPVLGINLGRIGFLAETEAEHLDEALAQVVRREYRIEHRMTLDVLVRVDDEIIERGWALNEASIENRSRLGVLEVVLEVDGRPVSAFGCDGVLISTPTGSTAYAFSAGGPVVWPELEALLVVPSNAHALFARPLVTSPNSLIAVETVAGSHDGLVFCDGRRTLELPAGARVEVVRGKEPVRWIRLDSAPFADRMVRKFELPVTGWRGRKP.

D96 acts as the Proton acceptor in catalysis. NAD(+) contacts are provided by residues D96–G97, R101, N170–E171, D200, and T211–S216.

The protein belongs to the NAD kinase family. A divalent metal cation serves as cofactor.

It is found in the cytoplasm. It catalyses the reaction NAD(+) + ATP = ADP + NADP(+) + H(+). In terms of biological role, involved in the regulation of the intracellular balance of NAD and NADP, and is a key enzyme in the biosynthesis of NADP. Catalyzes specifically the phosphorylation on 2'-hydroxyl of the adenosine moiety of NAD to yield NADP. The chain is NAD kinase from Rhodococcus jostii (strain RHA1).